The following is a 235-amino-acid chain: Methylosome subunit pICln (235 aa).

A disordered region spans residues 1 to 21; that stretch reads MSFLKSFPPPGSAEGLRQQQP. Ser-2 bears the N-acetylserine mark. Phosphoserine is present on residues Ser-100, Ser-142, Ser-191, Ser-193, Ser-196, and Ser-208. The interval 133-157 is disordered; it reads LHPDPEDEDSDDYDGEEYDVEAHEQ. The segment covering 137–151 has biased composition (acidic residues); sequence PEDEDSDDYDGEEYD. Residues 195–217 form a disordered region; that stretch reads SSQYNMAGVRTEDSTRDYEDGME. The span at 204 to 213 shows a compositional bias: basic and acidic residues; the sequence is RTEDSTRDYE. Thr-221 carries the post-translational modification Phosphothreonine.

This sequence belongs to the pICln (TC 1.A.47) family. As to quaternary structure, component of the methylosome, a 20S complex containing at least PRMT5/SKB1, WDR77/MEP50 and CLNS1A/pICln. May mediate SNRPD1 and SNRPD3 methylation. Forms a 6S pICln-Sm complex composed of CLNS1A/pICln, SNRPD1, SNRPD2, SNRPE, SNRPF and SNRPG; ring-like structure where CLNS1A/pICln mimics additional Sm proteins and which is unable to assemble into the core snRNP. Interacts with LSM10 and LSM11.

It is found in the cytoplasm. It localises to the cytosol. The protein resides in the nucleus. The protein localises to the cytoskeleton. Involved in both the assembly of spliceosomal snRNPs and the methylation of Sm proteins. Chaperone that regulates the assembly of spliceosomal U1, U2, U4 and U5 small nuclear ribonucleoproteins (snRNPs), the building blocks of the spliceosome, and thereby plays an important role in the splicing of cellular pre-mRNAs. Most spliceosomal snRNPs contain a common set of Sm proteins SNRPB, SNRPD1, SNRPD2, SNRPD3, SNRPE, SNRPF and SNRPG that assemble in a heptameric protein ring on the Sm site of the small nuclear RNA to form the core snRNP (Sm core). In the cytosol, the Sm proteins SNRPD1, SNRPD2, SNRPE, SNRPF and SNRPG are trapped in an inactive 6S pICln-Sm complex by the chaperone CLNS1A that controls the assembly of the core snRNP. Dissociation by the SMN complex of CLNS1A from the trapped Sm proteins and their transfer to an SMN-Sm complex triggers the assembly of core snRNPs and their transport to the nucleus. The polypeptide is Methylosome subunit pICln (CLNS1A) (Canis lupus familiaris (Dog)).